The chain runs to 921 residues: Isoleucine--tRNA ligase (921 aa).

A 'HIGH' region motif is present at residues 57–67; the sequence is PYANGELHMGH. Residue glutamate 552 participates in L-isoleucyl-5'-AMP binding. Positions 593–597 match the 'KMSKS' region motif; it reads KMSKS. Lysine 596 is a binding site for ATP. 4 residues coordinate Zn(2+): cysteine 888, cysteine 891, cysteine 908, and cysteine 911.

This sequence belongs to the class-I aminoacyl-tRNA synthetase family. IleS type 1 subfamily. As to quaternary structure, monomer. Zn(2+) serves as cofactor.

Its subcellular location is the cytoplasm. It carries out the reaction tRNA(Ile) + L-isoleucine + ATP = L-isoleucyl-tRNA(Ile) + AMP + diphosphate. Functionally, catalyzes the attachment of isoleucine to tRNA(Ile). As IleRS can inadvertently accommodate and process structurally similar amino acids such as valine, to avoid such errors it has two additional distinct tRNA(Ile)-dependent editing activities. One activity is designated as 'pretransfer' editing and involves the hydrolysis of activated Val-AMP. The other activity is designated 'posttransfer' editing and involves deacylation of mischarged Val-tRNA(Ile). The polypeptide is Isoleucine--tRNA ligase (Listeria innocua serovar 6a (strain ATCC BAA-680 / CLIP 11262)).